The chain runs to 581 residues: Peptidyl-prolyl cis-trans isomerase FKBP10 (581 aa).

An N-terminal signal peptide occupies residues M1–A33. PPIase FKBP-type domains are found at residues G61–W149, S173–H261, and G285–H373. N-linked (GlcNAc...) asparagine glycosylation is found at N69, N181, N293, N309, N351, N392, and N406. Residues G398–E485 form the PPIase FKBP-type 4 domain. 2 EF-hand domains span residues W496 to E531 and D541 to R576. Ca(2+)-binding residues include D509, N511, D513, E515, E520, D554, N556, D558, K560, and E565. The segment at K533–L581 is disordered. Residues R555 to L581 show a composition bias toward basic and acidic residues. The short motif at H578 to L581 is the Prevents secretion from ER element.

N-glycosylated. Post-translationally, phosphorylated. Expressed in aorta, brain, heart, kidney, lung, spleen and testis. Not detected in liver.

Its subcellular location is the endoplasmic reticulum lumen. The enzyme catalyses [protein]-peptidylproline (omega=180) = [protein]-peptidylproline (omega=0). Its activity is regulated as follows. Inhibited by both FK506 and rapamycin, but not by cyclosporin A. PPIases accelerate the folding of proteins during protein synthesis. This is Peptidyl-prolyl cis-trans isomerase FKBP10 (Fkbp10) from Mus musculus (Mouse).